The following is a 131-amino-acid chain: D-ribose pyranase (131 aa).

His20 serves as the catalytic Proton donor. Substrate contacts are provided by residues Asp28, His98, and 120–122; that span reads YAN.

The protein belongs to the RbsD / FucU family. RbsD subfamily. As to quaternary structure, homodecamer.

It is found in the cytoplasm. It catalyses the reaction beta-D-ribopyranose = beta-D-ribofuranose. It functions in the pathway carbohydrate metabolism; D-ribose degradation; D-ribose 5-phosphate from beta-D-ribopyranose: step 1/2. Catalyzes the interconversion of beta-pyran and beta-furan forms of D-ribose. In Laribacter hongkongensis (strain HLHK9), this protein is D-ribose pyranase.